A 316-amino-acid chain; its full sequence is Pantothenate kinase (316 aa).

95–102 (GSVAVGKS) serves as a coordination point for ATP.

Belongs to the prokaryotic pantothenate kinase family.

Its subcellular location is the cytoplasm. The enzyme catalyses (R)-pantothenate + ATP = (R)-4'-phosphopantothenate + ADP + H(+). The protein operates within cofactor biosynthesis; coenzyme A biosynthesis; CoA from (R)-pantothenate: step 1/5. This Enterobacter sp. (strain 638) protein is Pantothenate kinase.